The primary structure comprises 95 residues: U8-barytoxin-Tl1a (95 aa).

A signal peptide spans 1–21 (MKTLVLVAVLGLASLYLLSYA). Residues 22–50 (SEVQQLSVAEEEFGALIDAFGGLLETEER) constitute a propeptide that is removed on maturation. Disulfide bonds link Cys57–Cys71, Cys64–Cys76, and Cys70–Cys86.

This sequence belongs to the neurotoxin 10 (Hwtx-1) family. 26 (ICK-1) subfamily. In terms of tissue distribution, expressed by the venom gland.

The protein localises to the secreted. Its function is as follows. Ion channel inhibitor. In Trittame loki (Brush-footed trapdoor spider), this protein is U8-barytoxin-Tl1a.